The sequence spans 168 residues: Small ribosomal subunit protein uS5 (168 aa).

Positions 13–76 constitute an S5 DRBM domain; it reads IQEKLVAVRR…ENARRNMISV (64 aa).

This sequence belongs to the universal ribosomal protein uS5 family. Part of the 30S ribosomal subunit. Contacts proteins S4 and S8.

In terms of biological role, with S4 and S12 plays an important role in translational accuracy. Its function is as follows. Located at the back of the 30S subunit body where it stabilizes the conformation of the head with respect to the body. The polypeptide is Small ribosomal subunit protein uS5 (Coxiella burnetii (strain RSA 493 / Nine Mile phase I)).